The sequence spans 83 residues: Sulfur carrier protein TusA (83 aa).

The active-site Cysteine persulfide intermediate is Cys-19.

The protein belongs to the sulfur carrier protein TusA family.

The protein resides in the cytoplasm. In terms of biological role, sulfur carrier protein which probably makes part of a sulfur-relay system. In Aliivibrio fischeri (strain ATCC 700601 / ES114) (Vibrio fischeri), this protein is Sulfur carrier protein TusA.